Consider the following 316-residue polypeptide: Pantothenate kinase (316 aa).

ATP is bound at residue 95-102 (GSVAVGKS).

This sequence belongs to the prokaryotic pantothenate kinase family.

Its subcellular location is the cytoplasm. It carries out the reaction (R)-pantothenate + ATP = (R)-4'-phosphopantothenate + ADP + H(+). The protein operates within cofactor biosynthesis; coenzyme A biosynthesis; CoA from (R)-pantothenate: step 1/5. This chain is Pantothenate kinase (coaA), found in Halalkalibacterium halodurans (strain ATCC BAA-125 / DSM 18197 / FERM 7344 / JCM 9153 / C-125) (Bacillus halodurans).